A 398-amino-acid polypeptide reads, in one-letter code: Elongation factor Tu (398 aa).

The tr-type G domain occupies 10–207; it reads KPHVNIGTIG…TVDEYIPEPE (198 aa). The segment at 19 to 26 is G1; it reads GHVDHGKT. 19–26 is a GTP binding site; sequence GHVDHGKT. Threonine 26 serves as a coordination point for Mg(2+). The interval 63 to 67 is G2; the sequence is GITIN. The G3 stretch occupies residues 84 to 87; that stretch reads DAPG. Residues 84-88 and 139-142 contribute to the GTP site; these read DAPGH and NKVD. Positions 139 to 142 are G4; sequence NKVD. The segment at 177–179 is G5; the sequence is SAL.

Belongs to the TRAFAC class translation factor GTPase superfamily. Classic translation factor GTPase family. EF-Tu/EF-1A subfamily. As to quaternary structure, monomer.

The protein resides in the cytoplasm. The catalysed reaction is GTP + H2O = GDP + phosphate + H(+). GTP hydrolase that promotes the GTP-dependent binding of aminoacyl-tRNA to the A-site of ribosomes during protein biosynthesis. The polypeptide is Elongation factor Tu (Streptococcus thermophilus (strain CNRZ 1066)).